The chain runs to 393 residues: Arginine--pyruvate transaminase AruH (393 aa).

An N6-(pyridoxal phosphate)lysine modification is found at Lys-237.

The protein belongs to the class-I pyridoxal-phosphate-dependent aminotransferase family. As to quaternary structure, homodimer. Pyridoxal 5'-phosphate is required as a cofactor.

It catalyses the reaction L-arginine + pyruvate = 5-guanidino-2-oxopentanoate + L-alanine. It functions in the pathway amino-acid degradation; L-arginine degradation. Functionally, catalyzes the conversion of L-arginine into 2-ketoarginine via transamination. L-arginine is the best substrate, but it can also use L-lysine, L-methionine, L-leucine, ornithine and L-glutamine, which indicates that it may have a broader physiological function in amino acid catabolism. The chain is Arginine--pyruvate transaminase AruH (aruH) from Pseudomonas aeruginosa (strain ATCC 15692 / DSM 22644 / CIP 104116 / JCM 14847 / LMG 12228 / 1C / PRS 101 / PAO1).